Consider the following 368-residue polypeptide: Quinolinate synthase (368 aa).

Residues His-46 and Ser-63 each contribute to the iminosuccinate site. Cys-110 contacts [4Fe-4S] cluster. Iminosuccinate is bound by residues Tyr-141 to Asn-143 and Ser-162. [4Fe-4S] cluster is bound at residue Cys-230. Residues His-256–Glu-258 and Thr-273 contribute to the iminosuccinate site. Cys-320 lines the [4Fe-4S] cluster pocket.

Belongs to the quinolinate synthase family. Type 3 subfamily. In terms of assembly, homotrimer. It depends on [4Fe-4S] cluster as a cofactor.

The protein resides in the cytoplasm. It carries out the reaction iminosuccinate + dihydroxyacetone phosphate = quinolinate + phosphate + 2 H2O + H(+). It participates in cofactor biosynthesis; NAD(+) biosynthesis; quinolinate from iminoaspartate: step 1/1. Its function is as follows. Catalyzes the condensation of iminoaspartate with dihydroxyacetone phosphate to form quinolinate. This chain is Quinolinate synthase, found in Bacillus subtilis (strain 168).